Reading from the N-terminus, the 264-residue chain is Glutamate racemase (264 aa).

Substrate is bound by residues 10–11 (DS) and 42–43 (YG). C73 (proton donor/acceptor) is an active-site residue. Residue 74 to 75 (NT) coordinates substrate. Catalysis depends on C183, which acts as the Proton donor/acceptor. 184–185 (TH) is a binding site for substrate.

This sequence belongs to the aspartate/glutamate racemases family.

The catalysed reaction is L-glutamate = D-glutamate. It functions in the pathway cell wall biogenesis; peptidoglycan biosynthesis. Its function is as follows. Provides the (R)-glutamate required for cell wall biosynthesis. The sequence is that of Glutamate racemase from Streptococcus suis (strain 98HAH33).